Consider the following 317-residue polypeptide: Probable RuBisCO transcriptional regulator (317 aa).

Residues 6–63 enclose the HTH lysR-type domain; it reads FTLDQLRILRAILIQGSFKKAATSLYISQPAVSSHVHNIEKQLNIQLFDRSHRNAQLT. The segment at residues 23-42 is a DNA-binding region (H-T-H motif); the sequence is FKKAATSLYISQPAVSSHVH.

The protein belongs to the LysR transcriptional regulatory family.

The protein resides in the plastid. It is found in the chloroplast. Its function is as follows. Trans-acting transcriptional regulator of RuBisCO genes (rbcL and rbcS) expression. In Cyanidium caldarium (Red alga), this protein is Probable RuBisCO transcriptional regulator (rbcR).